We begin with the raw amino-acid sequence, 421 residues long: MEF2-activating motif and SAP domain-containing transcriptional regulator (421 aa).

The MEF2-binding signature appears at 12-28 (IIRSKFRSVLQLRIHRR). Disordered regions lie at residues 104–156 (PPEQ…PPSH), 188–296 (KAML…ASLT), and 322–406 (DQVE…ADLS). The SAP domain maps to 165-199 (LEELTVSELRQQLRLRGLPVSGTKAMLLERMRGGT). The span at 191–214 (LLERMRGGTPPRERPKPRREDKEA) shows a compositional bias: basic and acidic residues. The segment at 208–421 (RREDKEAAAP…LLWELLPDPW (214 aa)) is transcription activation. The segment covering 230 to 241 (RLPSTVKASATN) has biased composition (polar residues). A compositionally biased stretch (pro residues) spans 260–292 (ASVPAPTPSPALAPTPTPAPVPAPAPAPFPTPP). A compositionally biased stretch (low complexity) spans 347–372 (SPDSEGFSSVFSSSLPSPTSSLSPSP).

In terms of assembly, interacts with MEF2C. Expressed in skeletal muscle, brain, placenta and spleen.

Its subcellular location is the nucleus. Transcriptional coactivator. Stimulates the transcriptional activity of MEF2C. Stimulates MYOD1 activity in part via MEF2, resulting in an enhancement of skeletal muscle differentiation. This chain is MEF2-activating motif and SAP domain-containing transcriptional regulator (Mamstr), found in Mus musculus (Mouse).